The following is a 555-amino-acid chain: Formate--tetrahydrofolate ligase (555 aa).

Residue 64–71 (TPAGEGKT) participates in ATP binding.

Belongs to the formate--tetrahydrofolate ligase family.

The catalysed reaction is (6S)-5,6,7,8-tetrahydrofolate + formate + ATP = (6R)-10-formyltetrahydrofolate + ADP + phosphate. Its pathway is one-carbon metabolism; tetrahydrofolate interconversion. This chain is Formate--tetrahydrofolate ligase, found in Allorhizobium ampelinum (strain ATCC BAA-846 / DSM 112012 / S4) (Agrobacterium vitis (strain S4)).